The chain runs to 280 residues: Phosphate import ATP-binding protein PstB (280 aa).

One can recognise an ABC transporter domain in the interval 34-275 (IEVKNLNFFY…PARKETEDYI (242 aa)). 66-73 (GPSGCGKS) contacts ATP.

It belongs to the ABC transporter superfamily. Phosphate importer (TC 3.A.1.7) family. The complex is composed of two ATP-binding proteins (PstB), two transmembrane proteins (PstC and PstA) and a solute-binding protein (PstS).

It is found in the cell inner membrane. It carries out the reaction phosphate(out) + ATP + H2O = ADP + 2 phosphate(in) + H(+). Functionally, part of the ABC transporter complex PstSACB involved in phosphate import. Responsible for energy coupling to the transport system. The protein is Phosphate import ATP-binding protein PstB of Burkholderia mallei (strain ATCC 23344).